The primary structure comprises 232 residues: Probable GTP-binding protein EngB (232 aa).

In terms of domain architecture, EngB-type G spans 13 to 188 (IGLEVAFAGR…AGVMGNWYEY (176 aa)). Residues 21 to 28 (GRSNAGKS), 48 to 52 (GRTQM), 67 to 70 (DLPG), 134 to 137 (TKAD), and 167 to 169 (FSA) contribute to the GTP site. Mg(2+) contacts are provided by S28 and T50.

This sequence belongs to the TRAFAC class TrmE-Era-EngA-EngB-Septin-like GTPase superfamily. EngB GTPase family. The cofactor is Mg(2+).

Its function is as follows. Necessary for normal cell division and for the maintenance of normal septation. The polypeptide is Probable GTP-binding protein EngB (Psychrobacter arcticus (strain DSM 17307 / VKM B-2377 / 273-4)).